We begin with the raw amino-acid sequence, 309 residues long: Homoserine O-succinyltransferase (309 aa).

The active-site Acyl-thioester intermediate is the C142. 2 residues coordinate substrate: K163 and S192. H235 acts as the Proton acceptor in catalysis. The active site involves E237. Residue R249 coordinates substrate.

The protein belongs to the MetA family. In terms of assembly, homodimer.

The protein resides in the cytoplasm. The enzyme catalyses L-homoserine + succinyl-CoA = O-succinyl-L-homoserine + CoA. The protein operates within amino-acid biosynthesis; L-methionine biosynthesis via de novo pathway; O-succinyl-L-homoserine from L-homoserine: step 1/1. Transfers a succinyl group from succinyl-CoA to L-homoserine, forming succinyl-L-homoserine. The polypeptide is Homoserine O-succinyltransferase (Escherichia coli (strain ATCC 8739 / DSM 1576 / NBRC 3972 / NCIMB 8545 / WDCM 00012 / Crooks)).